Consider the following 430-residue polypeptide: Dihydrolipoyllysine-residue acetyltransferase component of pyruvate dehydrogenase complex (430 aa).

The 76-residue stretch at 2–77 (AFEFRLPDIG…VVGDVIVKID (76 aa)) folds into the Lipoyl-binding domain. K43 carries the post-translational modification N6-lipoyllysine. A disordered region spans residues 80 to 122 (DAEDMQFKGHDDDSSSKEEPAKEEAPAEQAPVATQTEEVDENR). A compositionally biased stretch (basic and acidic residues) spans 84 to 104 (MQFKGHDDDSSSKEEPAKEEA). One can recognise a Peripheral subunit-binding (PSBD) domain in the interval 125-162 (KAMPSVRKYAREKGVNIKAVSGSGKNGRITKEDVDAYL). Positions 165–200 (GAPTASNESAASATSEEVAETPAAPAAVTLEGDFPE) are disordered. The span at 166 to 193 (APTASNESAASATSEEVAETPAAPAAVT) shows a compositional bias: low complexity. H401 is a catalytic residue.

Belongs to the 2-oxoacid dehydrogenase family. In terms of assembly, forms a 24-polypeptide structural core with octahedral symmetry. It depends on (R)-lipoate as a cofactor.

It carries out the reaction N(6)-[(R)-dihydrolipoyl]-L-lysyl-[protein] + acetyl-CoA = N(6)-[(R)-S(8)-acetyldihydrolipoyl]-L-lysyl-[protein] + CoA. Functionally, the pyruvate dehydrogenase complex catalyzes the overall conversion of pyruvate to acetyl-CoA and CO(2). It contains multiple copies of three enzymatic components: pyruvate dehydrogenase (E1), dihydrolipoamide acetyltransferase (E2) and lipoamide dehydrogenase (E3). The chain is Dihydrolipoyllysine-residue acetyltransferase component of pyruvate dehydrogenase complex (pdhC) from Staphylococcus aureus (strain COL).